Here is a 118-residue protein sequence, read N- to C-terminus: Ribonuclease P protein component (118 aa).

This sequence belongs to the RnpA family. In terms of assembly, consists of a catalytic RNA component (M1 or rnpB) and a protein subunit.

It carries out the reaction Endonucleolytic cleavage of RNA, removing 5'-extranucleotides from tRNA precursor.. RNaseP catalyzes the removal of the 5'-leader sequence from pre-tRNA to produce the mature 5'-terminus. It can also cleave other RNA substrates such as 4.5S RNA. The protein component plays an auxiliary but essential role in vivo by binding to the 5'-leader sequence and broadening the substrate specificity of the ribozyme. This chain is Ribonuclease P protein component, found in Desulfatibacillum aliphaticivorans.